The chain runs to 672 residues: MDALQLLTWSLILYLFASLASLFLLGLDRLAIKLSGITSLVGGVIGIISGITQLHAGVTLVARFAPPFEFADLTLRMDSLSAFMVLVISLLVVVCSLYSLTYMREYEGKGAAAMGFFMNIFIASMVALLVMDNAFWFIVLFEMMSLSSWFLVIARQDKTSINAGMLYFFIAHAGSVLIMIAFLLMGRESGSLDFASFRTLSLSPGLASAVFLLAFFGFGAKAGMMPLHSWLPRAHPAAPSHASALMSGVMVKIGIFGILKVAMDLLAQTGLPLWWGILVMAIGAISALLGVLYALAEQDIKRLLAWSTVENVGIILLAVGVAMVGLSLHDPLLTVVGLLGALFHLLNHALFKGLLFLGAGAIISRLHTHDMEKMGALAKRMPWTAAACLIGCLAISAIPPLNGFISEWYTWQSLFSLSRVEAVALQLAGPIAMVMLAVTGGLAVMCFVKMYGITFCGAPRSTHAEEAQEVPNTMIVAMLLLAALCVLIALSASWLAPKIMHIAHAFTNTPPATVASGIALVPGTFHTQVTPSLLLLLLLAMPLLPGLYWLWCRSRRAAFRRTGDAWACGYGWENAMAPSGNGVMQPLRVVFSALFRLRQQLDPTLRLNKGLAHVTARAQSTEPFWDERVIRPIVSATQRLAKEIQHLQSGDFRLYCLYVVAALVVLLIAIAV.

The Periplasmic segment spans residues 1–5 (MDALQ). A helical transmembrane segment spans residues 6-26 (LLTWSLILYLFASLASLFLLG). Residues 27-30 (LDRL) lie on the Cytoplasmic side of the membrane. A helical membrane pass occupies residues 31 to 51 (AIKLSGITSLVGGVIGIISGI). Over 52–79 (TQLHAGVTLVARFAPPFEFADLTLRMDS) the chain is Periplasmic. Residues 80–100 (LSAFMVLVISLLVVVCSLYSL) traverse the membrane as a helical segment. Residues 101–119 (TYMREYEGKGAAAMGFFMN) are Cytoplasmic-facing. A helical membrane pass occupies residues 120-140 (IFIASMVALLVMDNAFWFIVL). The Periplasmic portion of the chain corresponds to 141–164 (FEMMSLSSWFLVIARQDKTSINAG). The chain crosses the membrane as a helical span at residues 165–185 (MLYFFIAHAGSVLIMIAFLLM). The Cytoplasmic segment spans residues 186-199 (GRESGSLDFASFRT). The chain crosses the membrane as a helical span at residues 200–220 (LSLSPGLASAVFLLAFFGFGA). Topologically, residues 221–242 (KAGMMPLHSWLPRAHPAAPSHA) are periplasmic. A helical membrane pass occupies residues 243-263 (SALMSGVMVKIGIFGILKVAM). The Cytoplasmic portion of the chain corresponds to 264–272 (DLLAQTGLP). The helical transmembrane segment at 273 to 293 (LWWGILVMAIGAISALLGVLY) threads the bilayer. Over 294-311 (ALAEQDIKRLLAWSTVEN) the chain is Periplasmic. A helical membrane pass occupies residues 312 to 332 (VGIILLAVGVAMVGLSLHDPL). Over 333 to 342 (LTVVGLLGAL) the chain is Cytoplasmic. A helical membrane pass occupies residues 343 to 363 (FHLLNHALFKGLLFLGAGAII). Residues 364–384 (SRLHTHDMEKMGALAKRMPWT) are Periplasmic-facing. The helical transmembrane segment at 385-405 (AAACLIGCLAISAIPPLNGFI) threads the bilayer. The Cytoplasmic portion of the chain corresponds to 406 to 427 (SEWYTWQSLFSLSRVEAVALQL). A helical transmembrane segment spans residues 428 to 448 (AGPIAMVMLAVTGGLAVMCFV). Residues 449 to 474 (KMYGITFCGAPRSTHAEEAQEVPNTM) are Periplasmic-facing. The chain crosses the membrane as a helical span at residues 475–495 (IVAMLLLAALCVLIALSASWL). The Cytoplasmic segment spans residues 496–504 (APKIMHIAH). A helical transmembrane segment spans residues 505–525 (AFTNTPPATVASGIALVPGTF). Residues 526–531 (HTQVTP) are Periplasmic-facing. The chain crosses the membrane as a helical span at residues 532 to 552 (SLLLLLLLAMPLLPGLYWLWC). Over 553-651 (RSRRAAFRRT…KEIQHLQSGD (99 aa)) the chain is Cytoplasmic. A helical transmembrane segment spans residues 652–672 (FRLYCLYVVAALVVLLIAIAV).

The protein belongs to the complex I subunit 5 family.

Its subcellular location is the cell inner membrane. Its function is as follows. Possible component of hydrogenase 4. The polypeptide is Hydrogenase-4 component B (Escherichia coli (strain K12)).